The sequence spans 752 residues: Polyribonucleotide nucleotidyltransferase (752 aa).

The Mg(2+) site is built by D542 and D548. A KH domain is found at 608–667 (PRITTIQIPVSKIGELIGPKGKNINALTEETGANISIEDDGTVFISAASGEAAEAAIEKI). Residues 679–748 (GERFLGTVVK…NRGKISLVPV (70 aa)) form the S1 motif domain.

It belongs to the polyribonucleotide nucleotidyltransferase family. The cofactor is Mg(2+).

The protein localises to the cytoplasm. The catalysed reaction is RNA(n+1) + phosphate = RNA(n) + a ribonucleoside 5'-diphosphate. Its function is as follows. Involved in mRNA degradation. Catalyzes the phosphorolysis of single-stranded polyribonucleotides processively in the 3'- to 5'-direction. This is Polyribonucleotide nucleotidyltransferase from Corynebacterium efficiens (strain DSM 44549 / YS-314 / AJ 12310 / JCM 11189 / NBRC 100395).